The chain runs to 323 residues: Small ribosomal subunit protein mS35 (323 aa).

The disordered stretch occupies residues 31–59 (PVPTPSLPERTPGNERPPRRKALPPRTEK). A coiled-coil region spans residues 257-321 (SSERNILETL…YKESVKRLLN (65 aa)).

The protein belongs to the mitochondrion-specific ribosomal protein mS35 family. In terms of assembly, component of the mitochondrial small ribosomal subunit (mt-SSU). Mature mammalian 55S mitochondrial ribosomes consist of a small (28S) and a large (39S) subunit. The 28S small subunit contains a 12S ribosomal RNA (12S mt-rRNA) and 30 different proteins. The 39S large subunit contains a 16S rRNA (16S mt-rRNA), a copy of mitochondrial valine transfer RNA (mt-tRNA(Val)), which plays an integral structural role, and 52 different proteins.

The protein localises to the mitochondrion. The polypeptide is Small ribosomal subunit protein mS35 (Homo sapiens (Human)).